Consider the following 218-residue polypeptide: Protein GrpE (218 aa).

Residues 1–10 (MSGEASTPAQ) are compositionally biased toward polar residues. 2 disordered regions span residues 1–44 (MSGE…DPAE) and 198–218 (SMGP…AEDS). Residues 200–218 (GPGPSADAEGAASAEAEDS) show a composition bias toward low complexity.

Belongs to the GrpE family. As to quaternary structure, homodimer.

The protein resides in the cytoplasm. In terms of biological role, participates actively in the response to hyperosmotic and heat shock by preventing the aggregation of stress-denatured proteins, in association with DnaK and GrpE. It is the nucleotide exchange factor for DnaK and may function as a thermosensor. Unfolded proteins bind initially to DnaJ; upon interaction with the DnaJ-bound protein, DnaK hydrolyzes its bound ATP, resulting in the formation of a stable complex. GrpE releases ADP from DnaK; ATP binding to DnaK triggers the release of the substrate protein, thus completing the reaction cycle. Several rounds of ATP-dependent interactions between DnaJ, DnaK and GrpE are required for fully efficient folding. This chain is Protein GrpE, found in Parasynechococcus marenigrum (strain WH8102).